A 160-amino-acid chain; its full sequence is NADH-quinone oxidoreductase subunit B (160 aa).

[4Fe-4S] cluster contacts are provided by Cys-37, Cys-38, Cys-102, and Cys-132.

It belongs to the complex I 20 kDa subunit family. In terms of assembly, NDH-1 is composed of 14 different subunits. Subunits NuoB, C, D, E, F, and G constitute the peripheral sector of the complex. The cofactor is [4Fe-4S] cluster.

The protein localises to the cell inner membrane. It catalyses the reaction a quinone + NADH + 5 H(+)(in) = a quinol + NAD(+) + 4 H(+)(out). Functionally, NDH-1 shuttles electrons from NADH, via FMN and iron-sulfur (Fe-S) centers, to quinones in the respiratory chain. Couples the redox reaction to proton translocation (for every two electrons transferred, four hydrogen ions are translocated across the cytoplasmic membrane), and thus conserves the redox energy in a proton gradient. In Cupriavidus metallidurans (strain ATCC 43123 / DSM 2839 / NBRC 102507 / CH34) (Ralstonia metallidurans), this protein is NADH-quinone oxidoreductase subunit B.